Reading from the N-terminus, the 426-residue chain is Citrate transporter (426 aa).

12 consecutive transmembrane segments (helical) span residues 1–21, 22–42, 59–79, 86–106, 137–157, 176–196, 232–252, 278–298, 318–338, 343–363, 377–397, and 406–426; these read MLAILGFVMMIVFMYLIMSNR, LSALIALIVVPIVFALISGFG, TGIMLLFAILYFGIMIDSGLF, ILSFVKGDPLKIAVGTAVLTM, LVLAGIAMLGSGVMNIIPWGG, PLIPAMIAGILWVIAVAYILG, LLTVALMAALITSLLPLPVLF, AGNALNVVSMVFAAGIFTGIL, AMGPHLPLITAIVSMPFTFFM, FYFGVLPIIAEAASAYGIDAA, LLSPLVPSTYLLVGMAGVSFG, and WAVGTTIVMTIAALLIGIISF.

This sequence belongs to the CitM (TC 2.A.11) transporter family.

The protein resides in the cell membrane. In terms of biological role, transports the free citrate anion. Probably cotransports citrate and at least three or four protons. The citrate uptake is inhibited by the presence of magnesium ions. In Bacillus subtilis (strain 168), this protein is Citrate transporter (citN).